Here is a 537-residue protein sequence, read N- to C-terminus: Glucocorticoid-induced transcript 1 protein (537 aa).

Disordered regions lie at residues 1-45 and 62-254; these read MSTA…APAA and LLRG…HGNH. Phosphoserine is present on residues Ser-69, Ser-96, Ser-98, and Ser-99. The span at 69-86 shows a compositional bias: low complexity; that stretch reads SPTRPAAAATAAAALGSL. Pro residues predominate over residues 97 to 106; sequence PSSPTPPPAA. Thr-101 is modified (phosphothreonine). The segment covering 121–136 has biased composition (basic and acidic residues); it reads RSPESRRRSSSPERRS. The span at 152 to 168 shows a compositional bias: low complexity; it reads IRTSSTIRRTSSLDTIT. Phosphoserine occurs at positions 162 and 163. Thr-166 and Thr-168 each carry phosphothreonine. Residues 178–192 are compositionally biased toward basic and acidic residues; it reads RDPHVHYPSCMRDKA. A Phosphoserine modification is found at Ser-214. Residues 217–244 are a coiled coil; sequence SADQLKEIAKLRQQLQRSKQSSRHSKEK. Residue Ser-248 is modified to Phosphoserine. The residue at position 256 (Thr-256) is a Phosphothreonine. Ser-293 is modified (phosphoserine). Basic and acidic residues predominate over residues 309–321; that stretch reads EVSKPLDIPDGRR. The tract at residues 309–407 is disordered; that stretch reads EVSKPLDIPD…KPNNSYMFKR (99 aa). Residues 329–346 show a composition bias toward polar residues; that stretch reads RSSSTRSIDTQTPSVQER. The residue at position 333 (Thr-333) is a Phosphothreonine. Ser-335 is modified (phosphoserine). At Thr-340 the chain carries Phosphothreonine. Residues 347-359 are compositionally biased toward low complexity; that stretch reads SSSCSSHSPCVSP. Phosphoserine is present on residues Ser-384, Ser-388, Ser-396, Ser-402, and Ser-470. The tract at residues 495-520 is disordered; the sequence is SLSDDTSTADSLEPSAQQPSQQQQLL.

Predominantly expressed in thymus and testis, especially in CD4+CD8+ cells and at specific stages of spermatogenesis.

The sequence is that of Glucocorticoid-induced transcript 1 protein (Glcci1) from Mus musculus (Mouse).